The sequence spans 263 residues: Purine nucleoside phosphorylase SAV1187 (263 aa).

His-79, Cys-124, and His-141 together coordinate Zn(2+).

The protein belongs to the purine nucleoside phosphorylase YfiH/LACC1 family. Homodimer. Requires Cu(2+) as cofactor. The cofactor is Zn(2+).

The enzyme catalyses adenosine + phosphate = alpha-D-ribose 1-phosphate + adenine. It catalyses the reaction S-methyl-5'-thioadenosine + phosphate = 5-(methylsulfanyl)-alpha-D-ribose 1-phosphate + adenine. It carries out the reaction inosine + phosphate = alpha-D-ribose 1-phosphate + hypoxanthine. The catalysed reaction is adenosine + H2O + H(+) = inosine + NH4(+). Its function is as follows. Purine nucleoside enzyme that catalyzes the phosphorolysis of adenosine and inosine nucleosides, yielding D-ribose 1-phosphate and the respective free bases, adenine and hypoxanthine. Also catalyzes the phosphorolysis of S-methyl-5'-thioadenosine into adenine and S-methyl-5-thio-alpha-D-ribose 1-phosphate. Also has adenosine deaminase activity. The sequence is that of Purine nucleoside phosphorylase SAV1187 from Staphylococcus aureus (strain Mu50 / ATCC 700699).